The sequence spans 362 residues: Protein RecA (362 aa).

Residue 77–84 coordinates ATP; the sequence is GPESSGKT.

Belongs to the RecA family.

It localises to the cytoplasm. Can catalyze the hydrolysis of ATP in the presence of single-stranded DNA, the ATP-dependent uptake of single-stranded DNA by duplex DNA, and the ATP-dependent hybridization of homologous single-stranded DNAs. It interacts with LexA causing its activation and leading to its autocatalytic cleavage. This Nitrobacter winogradskyi (strain ATCC 25391 / DSM 10237 / CIP 104748 / NCIMB 11846 / Nb-255) protein is Protein RecA.